Consider the following 272-residue polypeptide: Probable proteasome subunit beta type-5 (272 aa).

Positions 1-61 are cleaved as a propeptide — removed in mature form; that stretch reads MNSIVSKYTQ…KHCLIKMNHG (61 aa). The active-site Nucleophile is threonine 62.

This sequence belongs to the peptidase T1B family. In terms of assembly, the 26S proteasome consists of a 20S proteasome core and two 19S regulatory subunits. The 20S proteasome core is composed of 28 subunits that are arranged in four stacked rings, resulting in a barrel-shaped structure. The two end rings are each formed by seven alpha subunits, and the two central rings are each formed by seven beta subunits. The catalytic chamber with the active sites is on the inside of the barrel.

It localises to the cytoplasm. The protein resides in the nucleus. It catalyses the reaction Cleavage of peptide bonds with very broad specificity.. The proteasome is a multicatalytic proteinase complex which is characterized by its ability to cleave peptides with Arg, Phe, Tyr, Leu, and Glu adjacent to the leaving group at neutral or slightly basic pH. The proteasome has an ATP-dependent proteolytic activity. In Schizosaccharomyces pombe (strain 972 / ATCC 24843) (Fission yeast), this protein is Probable proteasome subunit beta type-5 (pts1).